We begin with the raw amino-acid sequence, 280 residues long: MKDVYFMERDPYAPIRHCYGISKILYEGKSKYQEIQVVESHYFGKILILDGVVQFTEKNEFFYHEMLTHPVMFAHKNPQNVLIIGGGDGGILREVLKHKSVKKAVLVDIDKDVVEVSKKFFPTVACSMDDPRAIILNEDGFKYIQDYKNEFDVIIVDSTDPVGFAHVLTTEEFFKYVFEALKEDGIYVGQSESLHYHLDIVVRFQKALKKSFPIVDLYTTVIPVYAGYWWSFSVGSKVYNPREISREVDVETRFYSDEIHKNAFLPPNFYQKILNGNFKY.

Residues 3-237 (DVYFMERDPY…YWWSFSVGSK (235 aa)) enclose the PABS domain. Gln33 provides a ligand contact to S-methyl-5'-thioadenosine. Spermidine is bound by residues His64 and Asp88. S-methyl-5'-thioadenosine contacts are provided by residues Asp108 and 139 to 140 (DG). The active-site Proton acceptor is Asp157. Position 157–160 (157–160 (DSTD)) interacts with spermidine.

The protein belongs to the spermidine/spermine synthase family. As to quaternary structure, homodimer or homotetramer.

The protein resides in the cytoplasm. It catalyses the reaction S-adenosyl 3-(methylsulfanyl)propylamine + putrescine = S-methyl-5'-thioadenosine + spermidine + H(+). It participates in amine and polyamine biosynthesis; spermidine biosynthesis; spermidine from putrescine: step 1/1. Functionally, catalyzes the irreversible transfer of a propylamine group from the amino donor S-adenosylmethioninamine (decarboxy-AdoMet) to putrescine (1,4-diaminobutane) to yield spermidine. This Hydrogenobaculum sp. (strain Y04AAS1) protein is Polyamine aminopropyltransferase.